Consider the following 117-residue polypeptide: Tyrosine-protein phosphatase 25 (117 aa).

Positions 1–117 constitute a Tyrosine-protein phosphatase domain; sequence WLMIIEQKCN…DLIGQSPIVV (117 aa). Asp-85 provides a ligand contact to substrate.

It belongs to the protein-tyrosine phosphatase family.

The enzyme catalyses O-phospho-L-tyrosyl-[protein] + H2O = L-tyrosyl-[protein] + phosphate. The polypeptide is Tyrosine-protein phosphatase 25 (STY-25) (Styela plicata (Wrinkled sea squirt)).